A 762-amino-acid chain; its full sequence is N,N-dimethylformamidase beta subunit (762 aa).

In terms of assembly, heterotetramer of two DmfA1 (alpha) and two DmfA2 (beta) subunits.

The enzyme catalyses N,N-dimethylformamide + H2O = dimethylamine + formate. Activity is slightly inhibited by Mg(2+) and Mn(2+), and slightly increased by Cu(2+). Activity is slightly inhibited by the chelating agents 8-hydroxyquinoline, ethylenediaminetetraacetate, o-phenanthroline and 2,2'-bipyridyl. Functionally, hydrolyzes N,N-dimethylformamide, and to a lesser extent N,N-dimethylacetamide and N,N-diethylacetamide. Has no activity against the substituted amides N-methylformamide, N-ethylformamide, N-ethylformamide and N-methylacetamide or the unsubstituted amides formamide, nicotinamide, acetoamide, benzamide, acetamide and acrylamide. The polypeptide is N,N-dimethylformamidase beta subunit (Alcaligenes sp).